A 426-amino-acid polypeptide reads, in one-letter code: Histidine--tRNA ligase (426 aa).

This sequence belongs to the class-II aminoacyl-tRNA synthetase family. In terms of assembly, homodimer.

The protein localises to the cytoplasm. It catalyses the reaction tRNA(His) + L-histidine + ATP = L-histidyl-tRNA(His) + AMP + diphosphate + H(+). This Streptococcus pyogenes serotype M1 protein is Histidine--tRNA ligase.